A 150-amino-acid chain; its full sequence is Large ribosomal subunit protein bL9 (150 aa).

It belongs to the bacterial ribosomal protein bL9 family.

In terms of biological role, binds to the 23S rRNA. The sequence is that of Large ribosomal subunit protein bL9 from Pseudarthrobacter chlorophenolicus (strain ATCC 700700 / DSM 12829 / CIP 107037 / JCM 12360 / KCTC 9906 / NCIMB 13794 / A6) (Arthrobacter chlorophenolicus).